A 257-amino-acid polypeptide reads, in one-letter code: Diphthine synthase (257 aa).

Residues Leu9, Asp85, Val88, 113–114 (SI), Leu164, Ala209, and His234 each bind S-adenosyl-L-methionine.

It belongs to the diphthine synthase family. Homodimer.

The enzyme catalyses 2-[(3S)-amino-3-carboxypropyl]-L-histidyl-[translation elongation factor 2] + 3 S-adenosyl-L-methionine = diphthine-[translation elongation factor 2] + 3 S-adenosyl-L-homocysteine + 3 H(+). Its pathway is protein modification; peptidyl-diphthamide biosynthesis. Its function is as follows. S-adenosyl-L-methionine-dependent methyltransferase that catalyzes the trimethylation of the amino group of the modified target histidine residue in translation elongation factor 2 (EF-2), to form an intermediate called diphthine. The three successive methylation reactions represent the second step of diphthamide biosynthesis. This Methanocaldococcus jannaschii (strain ATCC 43067 / DSM 2661 / JAL-1 / JCM 10045 / NBRC 100440) (Methanococcus jannaschii) protein is Diphthine synthase.